Here is a 460-residue protein sequence, read N- to C-terminus: Heme sensor protein HssS (460 aa).

2 helical membrane-spanning segments follow: residues 11-31 (IYTITVMIFSAVASFLCTNII) and 164-184 (IFLAILITLLLLFSIILVISS). Positions 186–238 (YAIIKPIQQLKRATERLMHGNFDEVIHVTRKDEFGTLQYRFDKMRLSLKQLDD) constitute an HAMP domain. One can recognise a Histidine kinase domain in the interval 246–456 (NVSHEIKTPL…TFTITFKKVP (211 aa)). H249 carries the phosphohistidine; by autocatalysis modification.

In terms of processing, autophosphorylated.

Its subcellular location is the cell membrane. It catalyses the reaction ATP + protein L-histidine = ADP + protein N-phospho-L-histidine.. Member of the two-component regulatory system HssS/HssR involved in intracellular heme homeostasis and tempering of staphylococcal virulence. HssS functions as a heme sensor histidine kinase which is autophosphorylated at a histidine residue and transfers its phosphate group to an aspartate residue of HssR. HssR/HssS activates the expression of hrtAB, an efflux pump, in response to extracellular heme, hemin, hemoglobin or blood. In Staphylococcus saprophyticus subsp. saprophyticus (strain ATCC 15305 / DSM 20229 / NCIMB 8711 / NCTC 7292 / S-41), this protein is Heme sensor protein HssS (hssS).